The primary structure comprises 102 residues: NADH-quinone oxidoreductase subunit K (102 aa).

Helical transmembrane passes span 6–26 (LIGM…GVLA), 30–50 (ILFQ…AFVA), and 63–83 (MLIL…ALLL).

It belongs to the complex I subunit 4L family. In terms of assembly, NDH-1 is composed of 14 different subunits. Subunits NuoA, H, J, K, L, M, N constitute the membrane sector of the complex.

The protein resides in the cell inner membrane. It carries out the reaction a quinone + NADH + 5 H(+)(in) = a quinol + NAD(+) + 4 H(+)(out). Its function is as follows. NDH-1 shuttles electrons from NADH, via FMN and iron-sulfur (Fe-S) centers, to quinones in the respiratory chain. The immediate electron acceptor for the enzyme in this species is believed to be ubiquinone. Couples the redox reaction to proton translocation (for every two electrons transferred, four hydrogen ions are translocated across the cytoplasmic membrane), and thus conserves the redox energy in a proton gradient. The polypeptide is NADH-quinone oxidoreductase subunit K (Rhodopseudomonas palustris (strain HaA2)).